A 291-amino-acid chain; its full sequence is uncharacterized protein (291 aa).

10 helical membrane passes run Met1–Ala21, Ile26–Leu46, Pro67–Val87, Ser95–His115, Thr117–Leu137, Phe149–Phe169, Phe179–Phe199, Ser208–Ile228, Val241–Phe261, and Trp270–Ile290. The EamA domain maps to Ile107–Thr138.

The protein localises to the cell membrane. This is an uncharacterized protein from Haemophilus influenzae (strain ATCC 51907 / DSM 11121 / KW20 / Rd).